Reading from the N-terminus, the 623-residue chain is Protein FAM234B (623 aa).

Residues 1-82 (MATVLSRALK…TSERAPEGYP (82 aa)) are disordered. Residues 104-124 (AVFLLTVVISMILVLVCAFLI) form a helical membrane-spanning segment.

This sequence belongs to the FAM234 family.

It is found in the membrane. Its subcellular location is the golgi outpost. The protein resides in the cytoplasm. The protein localises to the cytoskeleton. It localises to the microtubule organizing center. In Gallus gallus (Chicken), this protein is Protein FAM234B (FAM234B).